Reading from the N-terminus, the 249-residue chain is 23S rRNA (guanosine-2'-O-)-methyltransferase RlmB (249 aa).

S-adenosyl-L-methionine contacts are provided by Gly-197, Ile-217, and Leu-226.

This sequence belongs to the class IV-like SAM-binding methyltransferase superfamily. RNA methyltransferase TrmH family. RlmB subfamily.

It is found in the cytoplasm. The enzyme catalyses guanosine(2251) in 23S rRNA + S-adenosyl-L-methionine = 2'-O-methylguanosine(2251) in 23S rRNA + S-adenosyl-L-homocysteine + H(+). Functionally, specifically methylates the ribose of guanosine 2251 in 23S rRNA. The chain is 23S rRNA (guanosine-2'-O-)-methyltransferase RlmB from Ralstonia nicotianae (strain ATCC BAA-1114 / GMI1000) (Ralstonia solanacearum).